The primary structure comprises 68 residues: uncharacterized protein (68 aa).

The disordered stretch occupies residues 1 to 27; sequence MNEFEKWIEGRYEPHEQKQKEHEDTMG.

This is an uncharacterized protein from Bacillus subtilis (strain 168).